A 337-amino-acid chain; its full sequence is Viral cathepsin (337 aa).

The first 16 residues, 1–16 (MNKLLILFLLLNAALT), serve as a signal peptide directing secretion. A propeptide spans 17-126 (RQDNHASANN…VVDGPAQRQR (110 aa)) (activation peptide). Intrachain disulfides connect C147/C188, C181/C221, and C276/C324. The active site involves C150. Active-site residues include H283 and N303.

The protein belongs to the peptidase C1 family. Synthesized as an inactive proenzyme and activated by proteolytic removal of the inhibitory propeptide.

The catalysed reaction is Endopeptidase of broad specificity, hydrolyzing substrates of both cathepsin L and cathepsin B.. Cysteine protease that plays an essential role in host liquefaction to facilitate horizontal transmission of the virus. May participate in the degradation of foreign protein expressed by the baculovirus system. This Lepidoptera (butterflies and moths) protein is Viral cathepsin (VCATH).